A 234-amino-acid polypeptide reads, in one-letter code: Ubiquitin carboxyl-terminal hydrolase 3 (234 aa).

The UCH catalytic domain occupies 12–232 (RWLPLESNPD…LNFNLIAISK (221 aa)). The Nucleophile role is filled by Cys-101. Residue His-172 is the Proton donor of the active site.

The protein belongs to the peptidase C12 family.

The catalysed reaction is Thiol-dependent hydrolysis of ester, thioester, amide, peptide and isopeptide bonds formed by the C-terminal Gly of ubiquitin (a 76-residue protein attached to proteins as an intracellular targeting signal).. This chain is Ubiquitin carboxyl-terminal hydrolase 3, found in Arabidopsis thaliana (Mouse-ear cress).